We begin with the raw amino-acid sequence, 440 residues long: Serine/threonine-protein kinase STK11 (440 aa).

Residues 49–309 form the Protein kinase domain; sequence YLMGDLLGEG…IQQIRQHNWF (261 aa). ATP is bound by residues 55–63 and lysine 78; that span reads LGEGSYGKV. Catalysis depends on aspartate 176, which acts as the Proton acceptor. 2 positions are modified to phosphothreonine; by autocatalysis: threonine 336 and threonine 365. Residues 370–440 form a disordered region; sequence VPGQVPEEEA…IRKLSTCKQQ (71 aa). Residues 430 to 440 are compositionally biased toward basic residues; it reads KIRKLSTCKQQ. Serine 435 bears the Phosphoserine; by PKA mark.

Belongs to the protein kinase superfamily. CAMK Ser/Thr protein kinase family. LKB1 subfamily. Catalytic component of a trimeric complex composed of STK11/LKB1, STRAD (STRADA or STRADB) and CAB39/MO25 (CAB39/MO25alpha or CAB39L/MO25beta). It depends on Mg(2+) as a cofactor. Mn(2+) is required as a cofactor. In terms of tissue distribution, ubiquitously expressed in all tissues tested. High levels were observed in duodenum and skeletal muscle, lower levels in liver and pancreas.

The protein localises to the nucleus. It is found in the cytoplasm. The enzyme catalyses L-seryl-[protein] + ATP = O-phospho-L-seryl-[protein] + ADP + H(+). It carries out the reaction L-threonyl-[protein] + ATP = O-phospho-L-threonyl-[protein] + ADP + H(+). Its function is as follows. Tumor suppressor serine/threonine-protein kinase that controls the activity of AMP-activated protein kinase (AMPK) family members, thereby playing a role in various processes such as cell metabolism, cell polarity, apoptosis and DNA damage response. Acts by phosphorylating the T-loop of AMPK family proteins, leading to promote their activity. The polypeptide is Serine/threonine-protein kinase STK11 (Gallus gallus (Chicken)).